The sequence spans 345 residues: Protein GAMETE CELL DEFECTIVE 1, mitochondrial (345 aa).

Residues 1-43 (MLALRKTLLHGRLPAAPPAAAAAAIASRIPALLRRLSSSPGDG) constitute a mitochondrion transit peptide. Residues 36–82 (LSSSPGDGQGGDEWGSSWSTGITKEHFDGSDAAVGRPVTSPSKPVSP) are disordered.

It is found in the mitochondrion. Its function is as follows. Essential for fertility (male and female gametophyte functions and development). Required for the integrity of female gametic mitochondria. Involved in embryo apical-basal patterning, and particularly dorsal-ventral patterning, during early embryogenesis, and endosperm free nucleus positioning and development as well as early endosperm development, probably by modulating the expression pattern of related genes (e.g. AL1, MYB3/AL2, CYP78A13/GE, PNH1, HAZ1, MPK6 and OSH1). Has function in triggering of endosperm programmed cell death (PCD) leading to syncytial endosperm cellularization and starchy endosperm cell maturation. Implicated in central vacuole dynamics necessary for microspore development leading to pollen production, and for pollen development and germination. In Oryza sativa subsp. indica (Rice), this protein is Protein GAMETE CELL DEFECTIVE 1, mitochondrial.